A 164-amino-acid polypeptide reads, in one-letter code: MERFLENAMYASRWLLAPVYFGLSLALLALSIKFFQEIIHVLPNIFAIAEADLVLTLLSLIDMALVGGLLVMVMFSGYENFVSQLDISDDKEKLSWLGKMDSTSLKSKVAASIVAISSIHLLRVFMDAKNVPDNKLMWYVIIHLTFVLSAFVMGYLDKLTRDKK.

Helical transmembrane passes span 15 to 35, 53 to 73, and 136 to 156; these read LLAP…IKFF, LVLT…LVMV, and LMWY…MGYL.

The protein belongs to the UPF0114 family.

The protein resides in the cell membrane. This Serratia proteamaculans (strain 568) protein is UPF0114 protein Spro_2386.